Consider the following 323-residue polypeptide: uncharacterized protein (323 aa).

One can recognise an S4 RNA-binding domain in the interval 16–95 (QRIDQFCLKI…DKLKIIFEDE (80 aa)). D148 is an active-site residue.

It belongs to the pseudouridine synthase RluA family.

It carries out the reaction a uridine in RNA = a pseudouridine in RNA. This is an uncharacterized protein from Mycoplasma genitalium (strain ATCC 33530 / DSM 19775 / NCTC 10195 / G37) (Mycoplasmoides genitalium).